The following is a 623-amino-acid chain: UvrABC system protein C (623 aa).

The GIY-YIG domain maps to 12-91 (FSPGVYLYKD…IKQYKPRFNI (80 aa)). A UVR domain is found at 201–236 (SDLARGLRARMEAASLEMRFEEAAGLRDLITTVEEI). The interval 604 to 623 (PVASVAQSEDAAPDVPDPQA) is disordered.

The protein belongs to the UvrC family. Interacts with UvrB in an incision complex.

The protein localises to the cytoplasm. Its function is as follows. The UvrABC repair system catalyzes the recognition and processing of DNA lesions. UvrC both incises the 5' and 3' sides of the lesion. The N-terminal half is responsible for the 3' incision and the C-terminal half is responsible for the 5' incision. The polypeptide is UvrABC system protein C (Solibacter usitatus (strain Ellin6076)).